We begin with the raw amino-acid sequence, 320 residues long: Zinc transporter ZitB (320 aa).

6 helical membrane-spanning segments follow: residues 16-36 (LLAAFIITATFMVAEVIGGLL), 43-63 (LADAGHMLTDAAALFVALVAV), 85-105 (AAFVNALTLILITAFIFWEAI), 117-137 (VPMLLVAIAGLLANIVAFWLL), 153-173 (LHVLGDLLGSVGAIAAAIIIL), and 180-200 (IDPILSILVSCLVLRSAWALL).

It belongs to the cation diffusion facilitator (CDF) transporter (TC 2.A.4) family. SLC30A subfamily.

Its subcellular location is the cell inner membrane. Its function is as follows. Involved in zinc efflux across the cytoplasmic membrane, thus reducing zinc accumulation in the cytoplasm and rendering bacteria more resistant to zinc. It may contribute to zinc homeostasis at low concentrations of zinc. The protein is Zinc transporter ZitB of Pectobacterium atrosepticum (strain SCRI 1043 / ATCC BAA-672) (Erwinia carotovora subsp. atroseptica).